The following is a 172-amino-acid chain: MAEQKSSYGYEELLACARGEMFGPGNAQLPLPPMLMVHRITDISETGGEFDKGYIRAEYDVRPDDWYFPCHFMGNPIMPGCLGLDGMWQLTGFFLGWLGEPGRGMALSTGEVKFKGMVRPHTKLLEYGIDFKRVMRGRLVLGTADGWLKADGETIYRASDLRVGLSKDSEGQ.

Histidine 71 is a catalytic residue.

It belongs to the thioester dehydratase family. FabA subfamily. In terms of assembly, homodimer.

Its subcellular location is the cytoplasm. It catalyses the reaction a (3R)-hydroxyacyl-[ACP] = a (2E)-enoyl-[ACP] + H2O. The catalysed reaction is (3R)-hydroxydecanoyl-[ACP] = (2E)-decenoyl-[ACP] + H2O. It carries out the reaction (2E)-decenoyl-[ACP] = (3Z)-decenoyl-[ACP]. It participates in lipid metabolism; fatty acid biosynthesis. Necessary for the introduction of cis unsaturation into fatty acids. Catalyzes the dehydration of (3R)-3-hydroxydecanoyl-ACP to E-(2)-decenoyl-ACP and then its isomerization to Z-(3)-decenoyl-ACP. Can catalyze the dehydratase reaction for beta-hydroxyacyl-ACPs with saturated chain lengths up to 16:0, being most active on intermediate chain length. In Brucella anthropi (strain ATCC 49188 / DSM 6882 / CCUG 24695 / JCM 21032 / LMG 3331 / NBRC 15819 / NCTC 12168 / Alc 37) (Ochrobactrum anthropi), this protein is 3-hydroxydecanoyl-[acyl-carrier-protein] dehydratase.